The chain runs to 458 residues: Flap endonuclease 1 (458 aa).

An N-domain region spans residues 1–105; that stretch reads MGIKGLTGLL…GVLSKRFEKR (105 aa). Position 34 (Asp-34) interacts with Mg(2+). 2 residues coordinate DNA: Arg-47 and Arg-71. Residues Asp-87, Glu-159, Glu-161, Asp-180, and Asp-182 each coordinate Mg(2+). Residues 123-254 form an I-domain region; it reads DVDRFSRRTV…KSALKLIREF (132 aa). Position 159 (Glu-159) interacts with DNA. Residues Gly-232 and Asp-234 each coordinate DNA. Asp-234 contributes to the Mg(2+) binding site. Disordered regions lie at residues 268–347 and 416–458; these read AAAR…IPDE and GFFT…AKKK. 2 stretches are compositionally biased toward acidic residues: residues 275-285 and 293-309; these read AEEEDEEEAEE and EMPDDEDGEKDSDDEEE. Positions 310–329 are enriched in basic and acidic residues; the sequence is AERRKKAEAAKKKKAQEKAK. The segment at 410–418 is interaction with PCNA; sequence QQGRLDGFF. Positions 442 to 452 are enriched in basic and acidic residues; the sequence is RKGEDKAEGSG.

This sequence belongs to the XPG/RAD2 endonuclease family. FEN1 subfamily. As to quaternary structure, interacts with PCNA. Three molecules of FEN1 bind to one PCNA trimer with each molecule binding to one PCNA monomer. PCNA stimulates the nuclease activity without altering cleavage specificity. Mg(2+) serves as cofactor. Post-translationally, phosphorylated. Phosphorylation upon DNA damage induces relocalization to the nuclear plasma.

The protein resides in the nucleus. The protein localises to the nucleolus. It is found in the nucleoplasm. It localises to the mitochondrion. Functionally, structure-specific nuclease with 5'-flap endonuclease and 5'-3' exonuclease activities involved in DNA replication and repair. During DNA replication, cleaves the 5'-overhanging flap structure that is generated by displacement synthesis when DNA polymerase encounters the 5'-end of a downstream Okazaki fragment. It enters the flap from the 5'-end and then tracks to cleave the flap base, leaving a nick for ligation. Also involved in the long patch base excision repair (LP-BER) pathway, by cleaving within the apurinic/apyrimidinic (AP) site-terminated flap. Acts as a genome stabilization factor that prevents flaps from equilibrating into structures that lead to duplications and deletions. Also possesses 5'-3' exonuclease activity on nicked or gapped double-stranded DNA, and exhibits RNase H activity. Also involved in replication and repair of rDNA and in repairing mitochondrial DNA. The protein is Flap endonuclease 1 of Coprinopsis cinerea (strain Okayama-7 / 130 / ATCC MYA-4618 / FGSC 9003) (Inky cap fungus).